A 90-amino-acid chain; its full sequence is MNEVISQPPCNIFRPLILSMHLSPVSILSPVLLIYLVIHSQNELVSMSWLFRSTICFGVSLFLSFFLVRILWGIAYSYNSNSMSIYFSYI.

2 helical membrane-spanning segments follow: residues isoleucine 17–valine 37 and isoleucine 55–alanine 75.

Its subcellular location is the membrane. This is an uncharacterized protein from Schizosaccharomyces pombe (strain 972 / ATCC 24843) (Fission yeast).